The primary structure comprises 250 residues: Urease accessory protein UreF (250 aa).

Residues 1 to 21 are disordered; it reads MDEADPGEAEAAQAEAAQDGA. Over residues 9–21 the composition is skewed to low complexity; the sequence is AEAAQAEAAQDGA.

Belongs to the UreF family. As to quaternary structure, ureD, UreF and UreG form a complex that acts as a GTP-hydrolysis-dependent molecular chaperone, activating the urease apoprotein by helping to assemble the nickel containing metallocenter of UreC. The UreE protein probably delivers the nickel.

The protein resides in the cytoplasm. Functionally, required for maturation of urease via the functional incorporation of the urease nickel metallocenter. The polypeptide is Urease accessory protein UreF (Methylobacterium sp. (strain 4-46)).